Reading from the N-terminus, the 273-residue chain is Bifunctional protein FolD (273 aa).

NADP(+)-binding positions include 155-157 (GRS), S180, and T221.

This sequence belongs to the tetrahydrofolate dehydrogenase/cyclohydrolase family. In terms of assembly, homodimer.

The catalysed reaction is (6R)-5,10-methylene-5,6,7,8-tetrahydrofolate + NADP(+) = (6R)-5,10-methenyltetrahydrofolate + NADPH. The enzyme catalyses (6R)-5,10-methenyltetrahydrofolate + H2O = (6R)-10-formyltetrahydrofolate + H(+). Its pathway is one-carbon metabolism; tetrahydrofolate interconversion. In terms of biological role, catalyzes the oxidation of 5,10-methylenetetrahydrofolate to 5,10-methenyltetrahydrofolate and then the hydrolysis of 5,10-methenyltetrahydrofolate to 10-formyltetrahydrofolate. The polypeptide is Bifunctional protein FolD (Coprothermobacter proteolyticus (strain ATCC 35245 / DSM 5265 / OCM 4 / BT)).